The chain runs to 236 residues: 2-C-methyl-D-erythritol 4-phosphate cytidylyltransferase (236 aa).

This sequence belongs to the IspD/TarI cytidylyltransferase family. IspD subfamily. As to quaternary structure, homodimer.

The enzyme catalyses 2-C-methyl-D-erythritol 4-phosphate + CTP + H(+) = 4-CDP-2-C-methyl-D-erythritol + diphosphate. The protein operates within isoprenoid biosynthesis; isopentenyl diphosphate biosynthesis via DXP pathway; isopentenyl diphosphate from 1-deoxy-D-xylulose 5-phosphate: step 2/6. Its function is as follows. Catalyzes the formation of 4-diphosphocytidyl-2-C-methyl-D-erythritol from CTP and 2-C-methyl-D-erythritol 4-phosphate (MEP). This Escherichia coli O7:K1 (strain IAI39 / ExPEC) protein is 2-C-methyl-D-erythritol 4-phosphate cytidylyltransferase.